We begin with the raw amino-acid sequence, 170 residues long: Tubulin polymerization-promoting protein family member 2 (170 aa).

Residues 127–170 (TGTHKERFDESGKGKGIAGREEMTDNTGYVSGYKGSGTYDKKTK) are disordered. A compositionally biased stretch (basic and acidic residues) spans 129–149 (THKERFDESGKGKGIAGREEM).

Belongs to the TPPP family. As to expression, expressed in spermatids. Detected in liver cancer (at protein level).

It is found in the cytoplasm. It localises to the cytosol. Its subcellular location is the cell projection. The protein resides in the cilium. The protein localises to the flagellum. Functionally, probable regulator of microtubule dynamics required for sperm motility. In contrast to other members of the family, has no microtubule bundling activity. The chain is Tubulin polymerization-promoting protein family member 2 from Homo sapiens (Human).